A 249-amino-acid chain; its full sequence is GTP cyclohydrolase 1 type 2 homolog (249 aa).

A divalent metal cation-binding residues include H64, H65, D102, H217, and E221.

Belongs to the GTP cyclohydrolase I type 2/NIF3 family. As to quaternary structure, homohexamer.

The sequence is that of GTP cyclohydrolase 1 type 2 homolog from Neisseria meningitidis serogroup B (strain ATCC BAA-335 / MC58).